A 171-amino-acid polypeptide reads, in one-letter code: Thioredoxin-2 (171 aa).

The region spanning 41–169 (AFNASPSTSQ…LQALISANHP (129 aa)) is the Thioredoxin domain. A disulfide bridge links C95 with C98.

Belongs to the thioredoxin family.

The protein resides in the cytoplasm. It localises to the vacuole. In terms of biological role, thioredoxin involved in responses to oxidative and cell wall stresses. Plays an important role in appressorium formation on hyphal tips. TRX2 may affect invasive growth via the MST11-MST7-PMK1 pathway since it is required for the proper folding or dimerization of MAPKK MST7. In Pyricularia oryzae (strain 70-15 / ATCC MYA-4617 / FGSC 8958) (Rice blast fungus), this protein is Thioredoxin-2.